We begin with the raw amino-acid sequence, 26 residues long: Mucus envelope protein (26 aa).

In terms of processing, glycosylated. As to expression, produced by the opercular gland in the gill cavity and secreted as part of the mucus cocoon.

It localises to the secreted. In terms of biological role, exhibits antibacterial activity. May play a role in protection against parasite settlement. This is Mucus envelope protein from Scarus vetula (Queen parrotfish).